The chain runs to 936 residues: Protein SIEL (936 aa).

Interacts with SHR, MGP, SCR, JKD, CPC, TMO7 and AGL21, but not with LFY or STM.

Its subcellular location is the nucleus. It is found in the endosome. The protein localises to the cytoplasm. The protein resides in the cell cortex. Its function is as follows. Intracellular shuttle that promotes movement of SHR from the stele into the endodermis. Required for SHR association to endosomes and localization, and for intercellular movement of SHR. This is Protein SIEL from Arabidopsis thaliana (Mouse-ear cress).